The primary structure comprises 418 residues: Putative methylthiotransferase HP_0285 (418 aa).

Residues 2 to 110 (KKVYFKTFGC…INALLQEKKR (109 aa)) form the MTTase N-terminal domain. 6 residues coordinate [4Fe-4S] cluster: Cys-11, Cys-45, Cys-74, Cys-144, Cys-148, and Cys-151. The Radical SAM core domain occupies 130-355 (FVGKTRAFIK…KDLIFHKNKA (226 aa)).

It belongs to the methylthiotransferase family. It depends on [4Fe-4S] cluster as a cofactor.

The protein is Putative methylthiotransferase HP_0285 of Helicobacter pylori (strain ATCC 700392 / 26695) (Campylobacter pylori).